A 408-amino-acid chain; its full sequence is Homogentisate geranylgeranyltransferase (408 aa).

A chloroplast-targeting transit peptide spans 1 to 62; that stretch reads MQAVTAAAAA…TVMHKFSAIS (62 aa). The next 9 membrane-spanning stretches (helical) occupy residues 122 to 142, 156 to 176, 194 to 214, 221 to 241, 248 to 268, 286 to 306, 329 to 349, 352 to 372, and 386 to 406; these read HTIFGTIIGITSVSLLPMKSI, ALTAALCMNIYVVGLNQLYDI, SVATGVFLVLAFLIMSFSIGI, LMCALIVSFLLGSAYSIEAPF, ALLAASCILFVRAILVQLAFF, LVFATLFMCCFSAVIALFKDI, VYQLCISILLTAYGAATLVGA, TNLFQKIITVSGHGLLALTLW, and VTSFYMFIWKLFYAEYFLIPF.

The protein belongs to the UbiA prenyltransferase family. Expressed in seeds.

It localises to the plastid. The protein localises to the chloroplast membrane. The catalysed reaction is homogentisate + (2E,6E,10E)-geranylgeranyl diphosphate + H(+) = 6-geranylgeranyl-2-methylbenzene-1,4-diol + CO2 + diphosphate. Its pathway is cofactor biosynthesis; tocopherol biosynthesis. Involved in the synthesis of tocotrienol (vitamin E). Catalyzes the condensation of homogentisate and geranylgeranyl diphosphate to form 2-methyl-6-geranylgeranylbenzoquinol. Possesses low activity with phytyl diphosphate as substrate. The chain is Homogentisate geranylgeranyltransferase from Hordeum vulgare (Barley).